Reading from the N-terminus, the 343-residue chain is MTTDTSGRTGAPAAAAPAERFRYGFLKGNPQLTKNGELKHLLTIEGLPRAILNQILDTAEQFVSVTDREVKKVPLLRGKSVFNLFFENSTRTRTTFEIAAKRLSADVINLNINASSTSKGESLLDTINNLSAMHADLFVVRHASSGAPYLIAEHCAPHVHVINAGDGRHAHPTQGLLDMYTIRHYKRDFTKLRVAIVGDILHSRVARSDIHALTTLGVPEVRAIGPRTLLPGGLEQMGVRVFHNLDEGLKDVDVIIMLRLQNERMSGALLPSAQEYFKSWGLTPERLALAAPDAIVMHPGPMNRGVEIDSQVADGPQSVILNQVTFGIAVRMAVMGIVAGTND.

2 residues coordinate carbamoyl phosphate: Arg91 and Thr92. Position 119 (Lys119) interacts with L-aspartate. Carbamoyl phosphate contacts are provided by Arg141, His171, and Gln174. Positions 204 and 259 each coordinate L-aspartate. Gly300 and Pro301 together coordinate carbamoyl phosphate.

The protein belongs to the aspartate/ornithine carbamoyltransferase superfamily. ATCase family. As to quaternary structure, heterododecamer (2C3:3R2) of six catalytic PyrB chains organized as two trimers (C3), and six regulatory PyrI chains organized as three dimers (R2).

It catalyses the reaction carbamoyl phosphate + L-aspartate = N-carbamoyl-L-aspartate + phosphate + H(+). It functions in the pathway pyrimidine metabolism; UMP biosynthesis via de novo pathway; (S)-dihydroorotate from bicarbonate: step 2/3. Catalyzes the condensation of carbamoyl phosphate and aspartate to form carbamoyl aspartate and inorganic phosphate, the committed step in the de novo pyrimidine nucleotide biosynthesis pathway. This is Aspartate carbamoyltransferase catalytic subunit from Burkholderia thailandensis (strain ATCC 700388 / DSM 13276 / CCUG 48851 / CIP 106301 / E264).